The chain runs to 136 residues: SNARE-associated protein Snapin (136 aa).

At Ala-2 the chain carries N-acetylalanine. A Phosphoserine modification is found at Ser-10. Residue Thr-14 is modified to Phosphothreonine. A coiled-coil region spans residues 37–126; that stretch reads VQQLDSHVHA…TARRRAMLDS (90 aa). Ser-50 is modified (phosphoserine; by PKA). Residues 83 to 136 are interaction with TOR1A; the sequence is KKLLNARRRVVLVNNILQNAQERLRRLNHSVAKETARRRAMLDSGIYPPGSPGK. Position 126 is a phosphoserine (Ser-126). A Phosphotyrosine modification is found at Tyr-129. Residue Ser-133 is modified to Phosphoserine.

Belongs to the SNAPIN family. As to quaternary structure, component of the biogenesis of lysosome-related organelles complex 1 (BLOC-1) composed of BLOC1S1, BLOC1S2, BLOC1S3, BLOC1S4, BLOC1S5, BLOC1S6, DTNBP1/BLOC1S7 and SNAPIN/BLOC1S8. Octamer composed of one copy each BLOC1S1, BLOC1S2, BLOC1S3, BLOC1S4, BLOC1S5, BLOC1S6, DTNBP1/BLOC1S7 and SNAPIN/BLOC1S8. The BLOC-1 complex associates with the AP-3 protein complex and membrane protein cargos. Component of the BLOC-one-related complex (BORC) which is composed of BLOC1S1, BLOC1S2, BORCS5, BORCS6, BORCS7, BORCS8, KXD1 and SNAPIN. Associates with the SNARE complex. Interacts with CSNK1D, SNAP23 and STX4A but not with STX1A, VAMP2 and SYT1. Interacts with SNAP25; the interaction with SNAP25 is increased by its phosphorylation. Interacts with CNTRL, NANOS1, PUM2 and RGS7. Interacts with TOR1A; the interaction is direct and associates SNAPIN with the CSN complex. In terms of assembly, (Microbial infection) Interacts with human cytomegalovirus/HHV-5 protein UL70. In terms of processing, phosphorylated by CSNK1D/CK1. Phosphorylated by PKD, phosphorylation controls SNAPIN protein stability. As to expression, expressed in male germ cells of adult testis (at protein level).

It is found in the membrane. It localises to the cytoplasm. The protein resides in the cytosol. Its subcellular location is the perinuclear region. The protein localises to the golgi apparatus membrane. It is found in the lysosome membrane. It localises to the cytoplasmic vesicle. The protein resides in the secretory vesicle. Its subcellular location is the synaptic vesicle membrane. Functionally, component of the BLOC-1 complex, a complex that is required for normal biogenesis of lysosome-related organelles (LRO), such as platelet dense granules and melanosomes. In concert with the AP-3 complex, the BLOC-1 complex is required to target membrane protein cargos into vesicles assembled at cell bodies for delivery into neurites and nerve terminals. The BLOC-1 complex, in association with SNARE proteins, is also proposed to be involved in neurite extension. Plays a role in intracellular vesicle trafficking and synaptic vesicle recycling. May modulate a step between vesicle priming, fusion and calcium-dependent neurotransmitter release through its ability to potentiate the interaction of synaptotagmin with the SNAREs and the plasma-membrane-associated protein SNAP25. Its phosphorylation state influences exocytotic protein interactions and may regulate synaptic vesicle exocytosis. May also have a role in the mechanisms of SNARE-mediated membrane fusion in non-neuronal cells. As part of the BORC complex may play a role in lysosomes movement and localization at the cell periphery. Associated with the cytosolic face of lysosomes, the BORC complex may recruit ARL8B and couple lysosomes to microtubule plus-end-directed kinesin motor. This is SNARE-associated protein Snapin (SNAPIN) from Homo sapiens (Human).